Reading from the N-terminus, the 396-residue chain is NADH-quinone oxidoreductase subunit D (396 aa).

The protein belongs to the complex I 49 kDa subunit family. In terms of assembly, NDH-1 is composed of 14 different subunits. Subunits NuoB, C, D, E, F, and G constitute the peripheral sector of the complex.

It is found in the cell inner membrane. The enzyme catalyses a quinone + NADH + 5 H(+)(in) = a quinol + NAD(+) + 4 H(+)(out). Its function is as follows. NDH-1 shuttles electrons from NADH, via FMN and iron-sulfur (Fe-S) centers, to quinones in the respiratory chain. The immediate electron acceptor for the enzyme in this species is believed to be ubiquinone. Couples the redox reaction to proton translocation (for every two electrons transferred, four hydrogen ions are translocated across the cytoplasmic membrane), and thus conserves the redox energy in a proton gradient. The polypeptide is NADH-quinone oxidoreductase subunit D (Orientia tsutsugamushi (strain Ikeda) (Rickettsia tsutsugamushi)).